Consider the following 169-residue polypeptide: Peptide methionine sulfoxide reductase MsrA (169 aa).

Cys-10 is a catalytic residue.

This sequence belongs to the MsrA Met sulfoxide reductase family.

The catalysed reaction is L-methionyl-[protein] + [thioredoxin]-disulfide + H2O = L-methionyl-(S)-S-oxide-[protein] + [thioredoxin]-dithiol. It catalyses the reaction [thioredoxin]-disulfide + L-methionine + H2O = L-methionine (S)-S-oxide + [thioredoxin]-dithiol. In terms of biological role, has an important function as a repair enzyme for proteins that have been inactivated by oxidation. Catalyzes the reversible oxidation-reduction of methionine sulfoxide in proteins to methionine. This Streptococcus agalactiae serotype III (strain NEM316) protein is Peptide methionine sulfoxide reductase MsrA.